A 258-amino-acid chain; its full sequence is MKFLVLALTILLAAGTQAFPMQADAPSQLEHVKAALNMYIAQVKLTAQRSIDLLDDTEYKEYKMQLSQSLDNLQQFADSTSKSWPPTPRSSAPSCDATATVRAEVMKDVEDVRTQLEPKRAELTEVLNKHIDEYRKKLEPLIKQHIELRRTEMDAFRAKIDPVVEEMRAKVAVNVEETKTKLMPIVEIVRAKLTERLEELRTLAAPYAEEYKEQMFKAVGEVREKVAPLSEDFKARWAPPPRRPSKSSWLSTRPSARP.

Residues 1-18 (MKFLVLALTILLAAGTQA) form the signal peptide. Residues 32–63 (VKAALNMYIAQVKLTAQRSIDLLDDTEYKEYK) are 3 X approximate tandem repeats. 2 tandem repeats follow at residues 64–85 (MQLS…KSWP) and 86–106 (PTPR…AEVM). Residues 64 to 258 (MQLSQSLDNL…WLSTRPSARP (195 aa)) are 10 X approximate tandem repeats. The stretch at 107-117 (KDVEDVRTQLE) is one 3; half-length repeat. 7 consecutive repeat copies span residues 118–139 (PKRA…KKLE), 140–161 (PLIK…AKID), 162–183 (PVVE…TKLM), 184–205 (PIVE…TLAA), 206–227 (PYAE…EKVA), 228–238 (PLSEDFKARWA), and 239–258 (PPPR…SARP). The tract at residues 233–258 (FKARWAPPPRRPSKSSWLSTRPSARP) is disordered. Over residues 246 to 258 (KSSWLSTRPSARP) the composition is skewed to polar residues.

It belongs to the apolipoprotein A1/A4/E family. Major protein of plasma HDL, also found in chylomicrons. Expressed in liver, intestine and muscle.

It is found in the secreted. Participates in the reverse transport of cholesterol from tissues to the liver for excretion by promoting cholesterol efflux from tissues and by acting as a cofactor for the lecithin cholesterol acyltransferase (LCAT). The protein is Apolipoprotein A-I (apoa1) of Salmo salar (Atlantic salmon).